Here is a 1531-residue protein sequence, read N- to C-terminus: DNA topoisomerase 2-alpha (1531 aa).

Met-1 is subject to N-acetylmethionine. Residue Ser-4 is modified to Phosphoserine. Lys-17 participates in a covalent cross-link: Glycyl lysine isopeptide (Lys-Gly) (interchain with G-Cter in SUMO2). ATP is bound by residues Asn-91, Asn-120, and 148–150 (SSN). Residues Lys-156 and Lys-157 each participate in a glycyl lysine isopeptide (Lys-Gly) (interchain with G-Cter in SUMO2) cross-link. An ATP-binding site is contributed by 161–168 (GRNGYGAK). Lys-261 is covalently cross-linked (Glycyl lysine isopeptide (Lys-Gly) (interchain with G-Cter in SUMO2)). Thr-282 is modified (phosphothreonine). Residues 342–344 (KKK) are interaction with DNA. A Glycyl lysine isopeptide (Lys-Gly) (interchain with G-Cter in SUMO2) cross-link involves residue Lys-352. Residue 376–378 (QTK) coordinates ATP. Glycyl lysine isopeptide (Lys-Gly) (interchain with G-Cter in SUMO2) cross-links involve residues Lys-386, Lys-397, Lys-416, Lys-418, Lys-425, and Lys-440. The region spanning 455 to 572 (CTLILTEGDS…SLLRHRFLEE (118 aa)) is the Toprim domain. Glu-461 lines the Mg(2+) pocket. Glycyl lysine isopeptide (Lys-Gly) (interchain with G-Cter in SUMO2) cross-links involve residues Lys-466, Lys-480, and Lys-529. Residues Asp-541 and Asp-543 each coordinate Mg(2+). Residues Lys-584, Lys-599, Lys-614, Lys-622, Lys-625, Lys-632, Lys-639, Lys-655, Lys-662, and Lys-676 each participate in a glycyl lysine isopeptide (Lys-Gly) (interchain with G-Cter in SUMO2) cross-link. One can recognise a Topo IIA-type catalytic domain in the interval 715-1171 (IPSMVDGLKP…SPSDLWKEDL (457 aa)). Tyr-805 acts as the O-(5'-phospho-DNA)-tyrosine intermediate in catalysis. The interaction with DNA stretch occupies residues 990–999 (KLQTSLTCNS). A Nuclear export signal motif is present at residues 1018-1028 (ILRDFFELRLK). Lys-1075 is covalently cross-linked (Glycyl lysine isopeptide (Lys-Gly) (interchain with G-Cter in SUMO2)). Disordered stretches follow at residues 1090–1123 (WKEA…DSGP) and 1184–1531 (KEKQ…DDLF). A compositionally biased stretch (acidic residues) spans 1099–1108 (DEEENEESDN). Residue Ser-1106 is modified to Phosphoserine; by CK1. Glycyl lysine isopeptide (Lys-Gly) (interchain with G-Cter in SUMO2) cross-links involve residues Lys-1114, Lys-1196, and Lys-1204. Thr-1205 is subject to Phosphothreonine. At Ser-1213 the chain carries Phosphoserine. Residue Lys-1228 forms a Glycyl lysine isopeptide (Lys-Gly) (interchain with G-Cter in SUMO2) linkage. Lys-1240 participates in a covalent cross-link: Glycyl lysine isopeptide (Lys-Gly) (interchain with G-Cter in SUMO1); alternate. A Glycyl lysine isopeptide (Lys-Gly) (interchain with G-Cter in SUMO2); alternate cross-link involves residue Lys-1240. Thr-1244 is subject to Phosphothreonine. Ser-1247 bears the Phosphoserine mark. Basic and acidic residues predominate over residues 1256–1272 (EGLKQRLEKKQKREPGT). Glycyl lysine isopeptide (Lys-Gly) (interchain with G-Cter in SUMO2) cross-links involve residues Lys-1259, Lys-1276, Lys-1283, and Lys-1286. A phosphoserine mark is found at Ser-1295, Ser-1297, Ser-1299, and Ser-1302. Residue Thr-1327 is modified to Phosphothreonine. Residues 1330 to 1349 (LDSDEDFSDFDEKTDDEDFV) are compositionally biased toward acidic residues. Residues Ser-1332 and Ser-1337 each carry the phosphoserine modification. Thr-1343 is modified (phosphothreonine; by PLK3). Phosphoserine occurs at positions 1351 and 1354. Residues Lys-1363, Lys-1367, and Lys-1373 each participate in a glycyl lysine isopeptide (Lys-Gly) (interchain with G-Cter in SUMO2) cross-link. 2 positions are modified to phosphoserine: Ser-1374 and Ser-1377. A Glycyl lysine isopeptide (Lys-Gly) (interchain with G-Cter in SUMO2) cross-link involves residue Lys-1385. Residues Ser-1387, Ser-1391, Ser-1392, and Ser-1393 each carry the phosphoserine modification. Positions 1406–1431 (TNPVPKKNVTVKKTAAKSQSSTSTTG) are enriched in low complexity. A Glycyl lysine isopeptide (Lys-Gly) (interchain with G-Cter in SUMO2); alternate cross-link involves residue Lys-1422. An N6-acetyllysine; alternate modification is found at Lys-1422. Residues 1433 to 1439 (KKRAAPK) form an interaction with PLSCR1 region. Residue Lys-1442 forms a Glycyl lysine isopeptide (Lys-Gly) (interchain with G-Cter in SUMO2); alternate linkage. Lys-1442 carries the N6-acetyllysine; alternate modification. Ser-1449 carries the phosphoserine modification. Glycyl lysine isopeptide (Lys-Gly) (interchain with G-Cter in SUMO2) cross-links involve residues Lys-1454 and Lys-1459. Ser-1469 carries the post-translational modification Phosphoserine; by CK2. Thr-1470 carries the phosphothreonine modification. 3 positions are modified to phosphoserine: Ser-1471, Ser-1474, and Ser-1476. Residues Lys-1484 and Lys-1492 each participate in a glycyl lysine isopeptide (Lys-Gly) (interchain with G-Cter in SUMO2) cross-link. The span at 1491–1502 (SKGESDDFHMDF) shows a compositional bias: basic and acidic residues. 3 positions are modified to phosphoserine: Ser-1495, Ser-1504, and Ser-1525.

This sequence belongs to the type II topoisomerase family. In terms of assembly, homodimer. Interacts with COPS5. Interacts with RECQL5; this stimulates DNA decatenation. Interacts with SETMAR; stimulates the topoisomerase activity. Interacts with DHX9; this interaction occurs in a E2 enzyme UBE2I- and RNA-dependent manner, negatively regulates DHX9-mediated double-stranded DNA and RNA duplex helicase activity and stimulates TOP2A-mediated supercoiled DNA relaxation activity. Interacts with HNRNPU (via C-terminus); this interaction protects the topoisomerase TOP2A from degradation and positively regulates the relaxation of supercoiled DNA in a RNA-dependent manner. Interacts with MCM3AP isoform GANP. Interacts with ERCC6. Interacts with PLSCR1. Interacts with GCNA; this interaction allows the resolution of topoisomerase II (TOP2A) DNA-protein cross-links. Interacts with POL1RA/RPA1 (via dock II) and UBTF in the context of Pol I complex; may assist Pol I transcription initiation by releasing supercoils occurring during DNA unwinding. Interacts with TPRN; TPRN interacts with a number of DNA damage response proteins, is recruited to sites of DNA damage and may play a role in DNA damage repair. The cofactor is Mg(2+). Requires Mn(2+) as cofactor. It depends on Ca(2+) as a cofactor. Phosphorylation has no effect on catalytic activity. However, phosphorylation at Ser-1106 by CSNK1D/CK1 promotes DNA cleavable complex formation. In terms of processing, (Microbial infection) Deubiquitinated by Epstein-Barr virus BPLF1; leading to stabilized SUMOylated TOP2A trapped in cleavage complexes, which halts the DNA damage response to TOP2A-induced double-strand DNA breaks. Post-translationally, SUMOylated. In terms of tissue distribution, expressed in the tonsil, spleen, lymph node, thymus, skin, pancreas, testis, colon, kidney, liver, brain and lung. Also found in high-grade lymphomas, squamous cell lung tumors and seminomas.

The protein localises to the cytoplasm. It localises to the nucleus. It is found in the nucleoplasm. Its subcellular location is the nucleolus. It catalyses the reaction ATP-dependent breakage, passage and rejoining of double-stranded DNA.. Specifically inhibited by the intercalating agent amsacrine. Its function is as follows. Key decatenating enzyme that alters DNA topology by binding to two double-stranded DNA molecules, generating a double-stranded break in one of the strands, passing the intact strand through the broken strand, and religating the broken strand. May play a role in regulating the period length of BMAL1 transcriptional oscillation. This is DNA topoisomerase 2-alpha (TOP2A) from Homo sapiens (Human).